We begin with the raw amino-acid sequence, 258 residues long: Bidirectional sugar transporter SWEET9 (258 aa).

At 1–7 (MFLKVHE) the chain is on the extracellular side. Residues 8–28 (IAFLFGLLGNIVSFGVFLSPV) traverse the membrane as a helical segment. One can recognise a MtN3/slv 1 domain in the interval 10 to 96 (FLFGLLGNIV…FLYILYAPRE (87 aa)). The Cytoplasmic segment spans residues 29 to 42 (PTFYGIYKKKSSKG). The helical transmembrane segment at 43–63 (FQSIPYICALASATLLLYYGI) threads the bilayer. Residues 64-69 (MKTHAY) are Extracellular-facing. A helical transmembrane segment spans residues 70-90 (LIISINTFGCFIEISYLFLYI). The Cytoplasmic segment spans residues 91-103 (LYAPREAKISTLK). Residues 104-124 (LIVICNIGGLGLLILLVNLLV) traverse the membrane as a helical segment. Over 125–131 (PKQHRVS) the chain is Extracellular. A helical membrane pass occupies residues 132-152 (TVGWVCAAYSLAVFASPLSVM). Positions 132 to 216 (TVGWVCAAYS…ILYMMYQGST (85 aa)) constitute a MtN3/slv 2 domain. Over 153–165 (RKVIKTKSVEYMP) the chain is Cytoplasmic. The chain crosses the membrane as a helical span at residues 166 to 186 (FLLSLSLTLNAVMWFFYGLLI). The Extracellular segment spans residues 187 to 189 (KDK). Residues 190 to 210 (FIAMPNILGFLFGVAQMILYM) traverse the membrane as a helical segment. Topologically, residues 211 to 258 (MYQGSTKTDLPTENQLANKTDVNEVPIVAVELPDVGSDNVEGSVRPMK) are cytoplasmic.

The protein belongs to the SWEET sugar transporter family. Forms heterooligomers with SWEET1, SWEET5, SWEET8, SWEET11, SWEET13, SWEET16 and SWEET17. In terms of tissue distribution, specifically expressed in nectaries, mostly in the lower half of nectary parenchyma.

Its subcellular location is the cell membrane. It localises to the cytoplasmic vesicle membrane. The protein localises to the golgi apparatus. It is found in the trans-Golgi network membrane. Its function is as follows. Mediates both low-affinity uptake and efflux of sugar across the plasma membrane. Nectary-specific sugar transporter required for nectar production by mediating the secretion of sucrose from the nectary parenchyma to the extracellular space. The protein is Bidirectional sugar transporter SWEET9 of Arabidopsis thaliana (Mouse-ear cress).